Here is a 225-residue protein sequence, read N- to C-terminus: MNPCVLPTPLPDLDGDKRWHSIHRRFISDCREKDPDVIFLGDCIFETVQDTEAWNKYFAPLHCLNFSIRDDCTEHVLWRIENGALDNVNPKIVVLHVGTNNVRNSAEEVAEGVLANVTKIRQKLPNAYIVLPSLLPRGQQPNKLREKNAKINEVVNGLTKGLYRVQTVAIDKGLVQTDGSISHHDMFDYKNLTNAGAKKILEPLYDLLSQILNENEPENDLTPSE.

The protein belongs to the 'GDSL' lipolytic enzyme family. Platelet-activating factor acetylhydrolase IB beta/gamma subunits subfamily. Does not interact with Lis-1.

This is Platelet-activating factor acetylhydrolase IB subunit beta homolog (Paf-AHalpha) from Drosophila melanogaster (Fruit fly).